A 417-amino-acid polypeptide reads, in one-letter code: Type II methyltransferase M.KpnI (417 aa).

This sequence belongs to the N(4)/N(6)-methyltransferase family.

It catalyses the reaction a 2'-deoxyadenosine in DNA + S-adenosyl-L-methionine = an N(6)-methyl-2'-deoxyadenosine in DNA + S-adenosyl-L-homocysteine + H(+). Its function is as follows. A beta subtype methylase, recognizes the double-stranded sequence 5'-GGTACC-3', methylates A-4 on both strands, and protects the DNA from cleavage by the KpnI endonuclease. This Klebsiella pneumoniae protein is Type II methyltransferase M.KpnI.